The chain runs to 361 residues: Mitochondrial import receptor subunit TOM40 homolog (361 aa).

Residues 1–10 (MGNVLAASSP) are compositionally biased toward low complexity. The disordered stretch occupies residues 1 to 71 (MGNVLAASSP…TASASGAAED (71 aa)). Residues 11 to 36 (PAGPPPPPAPALVGLPPPPPSPPGFT) are compositionally biased toward pro residues. 2 stretches are compositionally biased toward low complexity: residues 37–52 (LPPL…STSR) and 59–71 (GAAT…AAED).

Belongs to the Tom40 family. Forms part of the preprotein translocase complex of the outer mitochondrial membrane (TOM complex) which consists of at least 7 different proteins (TOMM5, TOMM6, TOMM7, TOMM20, TOMM22, TOMM40 and TOMM70). Interacts with mitochondrial targeting sequences. Interacts with TIMM29; linking the TIM22 complex to the TOM complex. Forms a complex with BCAP31 (via C-terminus) which mediates the translocation of components of the mitochondrial membrane respiratory chain NADH dehydrogenase (Complex I) from the cytosol to the mitochondria. Interacts (via N-terminus) with CYP1A1 (via mitochondrial targeting signal); this interaction is required for CYP1A1 translocation across the mitochondrial outer membrane.

Its subcellular location is the mitochondrion outer membrane. Functionally, channel-forming protein essential for import of protein precursors into mitochondria. Plays a role in the assembly of the mitochondrial membrane respiratory chain NADH dehydrogenase (Complex I) by forming a complex with BCAP31 and mediating the translocation of Complex I components from the cytosol to the mitochondria. The polypeptide is Mitochondrial import receptor subunit TOM40 homolog (TOMM40) (Homo sapiens (Human)).